A 270-amino-acid chain; its full sequence is Tetraspanin-14 (270 aa).

Over 1 to 17 the chain is Cytoplasmic; it reads MHYYRYSNAEVSCWYKY. Residues 18-38 form a helical membrane-spanning segment; the sequence is LLFSYNIVFWLAGVVFLGVGL. The Extracellular portion of the chain corresponds to 39–61; the sequence is WAWSEKGVLSDLTKVTRLHGIDP. The helical transmembrane segment at 62–82 threads the bilayer; sequence VVLVLMVGVVMFTLGFAGCVG. The Cytoplasmic portion of the chain corresponds to 83 to 92; sequence ALRENICLLK. The helical transmembrane segment at 93–113 threads the bilayer; sequence FFCGAIVLIFFLELAVAVLAF. The Extracellular segment spans residues 114 to 232; the sequence is LFQDWVRDRF…QALEGWLPRN (119 aa). The segment at 114 to 232 is necessary and sufficient for interaction with ADAM10; it reads LFQDWVRDRF…QALEGWLPRN (119 aa). Cystine bridges form between Cys-153–Cys-221, Cys-154–Cys-186, Cys-170–Cys-180, and Cys-187–Cys-200. N-linked (GlcNAc...) asparagine glycosylation is present at Asn-169. A helical transmembrane segment spans residues 233–253; the sequence is IYIVAGVFIAISLLQIFGIFL. The Cytoplasmic portion of the chain corresponds to 254-270; sequence ARTLISDIEAVKAGHHF.

The protein belongs to the tetraspanin (TM4SF) family. Interacts with ADAM10; the interaction promotes ADAM10 maturation and cell surface expression.

Its subcellular location is the cell membrane. Its function is as follows. Part of TspanC8 subgroup, composed of 6 members that interact with the transmembrane metalloprotease ADAM10. This interaction is required for ADAM10 exit from the endoplasmic reticulum and for enzymatic maturation and trafficking to the cell surface as well as substrate specificity. Different TspanC8/ADAM10 complexes have distinct substrates. Negatively regulates ADAM10-mediated cleavage of GP6. Promotes ADAM10-mediated cleavage of CDH5. This Mus musculus (Mouse) protein is Tetraspanin-14 (Tspan14).